Here is a 255-residue protein sequence, read N- to C-terminus: Microfibril-associated glycoprotein 4 (255 aa).

Positions 1 to 21 (MKALLALPLLLLLSTPPCAPQ) are cleaved as a signal peptide. Positions 26–28 (RGD) match the Cell attachment site motif. In terms of domain architecture, Fibrinogen C-terminal spans 32-255 (RFCLQQPLDC…KRTEMKIRRA (224 aa)). N87 and N137 each carry an N-linked (GlcNAc...) asparagine glycan.

In terms of assembly, homodimer. Can also form higher oligomers. Interacts with FBN1, FBN2 and LOX. Interacts with COL1A1 in a Ca (2+)-dependent manner. Interacts with ELN in a Ca (2+)-dependent manner; this interaction promotes ELN self-assembly.

It is found in the secreted. Its subcellular location is the extracellular space. The protein localises to the extracellular matrix. In terms of biological role, could be involved in calcium-dependent cell adhesion or intercellular interactions. May contribute to the elastic fiber assembly and/or maintenance. This chain is Microfibril-associated glycoprotein 4 (MFAP4), found in Homo sapiens (Human).